Here is a 401-residue protein sequence, read N- to C-terminus: Dual specificity mitogen-activated protein kinase kinase 2 (401 aa).

N-acetylmethionine is present on M1. S23 carries the phosphoserine modification. In terms of domain architecture, Protein kinase spans F72–I370. ATP-binding positions include L78 to V86 and K101. The active-site Proton acceptor is the D194. A phosphoserine; by RAF mark is found at S222 and S226. The interval P282 to G310 is disordered. A phosphoserine mark is found at S293, S295, and S306. Residues T395 and T397 each carry the phosphothreonine modification.

The protein belongs to the protein kinase superfamily. STE Ser/Thr protein kinase family. MAP kinase kinase subfamily. Interacts with MORG1. Interacts with SGK1. Interacts with KSR1. Interacts with KSR1 and BRAF; the interaction with KSR1 mediates KSR1-BRAF dimerization. Interacts with GLS. Requires Mg(2+) as cofactor. Post-translationally, phosphorylation on Ser/Thr by MAP kinase kinase kinases (RAF or MEKK1) positively regulates the kinase activity. Phosphorylated by MAP2K1/MEK1. Low levels of autophosphorylation have been observed. As to expression, expressed in adult intestine, kidney, liver, lung, pancreas, spleen, thymus, and at high levels in the neonatal brain. Lower expression is found in adult brain and heart.

The protein localises to the cytoplasm. Its subcellular location is the membrane. The catalysed reaction is L-seryl-[protein] + ATP = O-phospho-L-seryl-[protein] + ADP + H(+). The enzyme catalyses L-threonyl-[protein] + ATP = O-phospho-L-threonyl-[protein] + ADP + H(+). It catalyses the reaction L-tyrosyl-[protein] + ATP = O-phospho-L-tyrosyl-[protein] + ADP + H(+). Inhibited by serine/threonine phosphatase 2A. Functionally, catalyzes the concomitant phosphorylation of a threonine and a tyrosine residue in a Thr-Glu-Tyr sequence located in MAP kinases. Activates the ERK1 and ERK2 MAP kinases. Activates BRAF in a KSR1 or KSR2-dependent manner; by binding to KSR1 or KSR2 releases the inhibitory intramolecular interaction between KSR1 or KSR2 protein kinase and N-terminal domains which promotes KSR1 or KSR2-BRAF dimerization and BRAF activation. This is Dual specificity mitogen-activated protein kinase kinase 2 (Map2k2) from Mus musculus (Mouse).